A 311-amino-acid polypeptide reads, in one-letter code: tRNA-cytidine(32) 2-sulfurtransferase (311 aa).

Residues 47-52 (SGGKDS) carry the PP-loop motif motif. [4Fe-4S] cluster-binding residues include Cys122, Cys125, and Cys213.

Belongs to the TtcA family. In terms of assembly, homodimer. Requires Mg(2+) as cofactor. It depends on [4Fe-4S] cluster as a cofactor.

The protein localises to the cytoplasm. The enzyme catalyses cytidine(32) in tRNA + S-sulfanyl-L-cysteinyl-[cysteine desulfurase] + AH2 + ATP = 2-thiocytidine(32) in tRNA + L-cysteinyl-[cysteine desulfurase] + A + AMP + diphosphate + H(+). It functions in the pathway tRNA modification. In terms of biological role, catalyzes the ATP-dependent 2-thiolation of cytidine in position 32 of tRNA, to form 2-thiocytidine (s(2)C32). The sulfur atoms are provided by the cysteine/cysteine desulfurase (IscS) system. The chain is tRNA-cytidine(32) 2-sulfurtransferase from Salmonella typhi.